The sequence spans 166 residues: Endoribonuclease YbeY (166 aa).

Residues H130, H134, and H140 each coordinate Zn(2+).

This sequence belongs to the endoribonuclease YbeY family. Zn(2+) serves as cofactor.

Its subcellular location is the cytoplasm. Its function is as follows. Single strand-specific metallo-endoribonuclease involved in late-stage 70S ribosome quality control and in maturation of the 3' terminus of the 16S rRNA. This Streptococcus uberis (strain ATCC BAA-854 / 0140J) protein is Endoribonuclease YbeY.